The primary structure comprises 568 residues: Small ribosomal subunit protein bS1 (568 aa).

6 consecutive S1 motif domains span residues 39–100 (KTVV…LSRE), 118–184 (GEFV…VSRR), 205–273 (GMIL…LGIK), 290–360 (GKKM…LSIK), 377–447 (GTII…LGIK), and 464–533 (GTIV…LSVK).

Belongs to the bacterial ribosomal protein bS1 family.

Binds mRNA; thus facilitating recognition of the initiation point. It is needed to translate mRNA with a short Shine-Dalgarno (SD) purine-rich sequence. The protein is Small ribosomal subunit protein bS1 (rpsA) of Rickettsia typhi (strain ATCC VR-144 / Wilmington).